A 223-amino-acid polypeptide reads, in one-letter code: Flagellar L-ring protein (223 aa).

The first 18 residues, 1–18 (MKKSLMALIVVGSFLLSA), serve as a signal peptide directing secretion. C19 carries the N-palmitoyl cysteine lipid modification. The S-diacylglycerol cysteine moiety is linked to residue C19.

Belongs to the FlgH family. In terms of assembly, the basal body constitutes a major portion of the flagellar organelle and consists of four rings (L,P,S, and M) mounted on a central rod.

Its subcellular location is the cell outer membrane. It is found in the bacterial flagellum basal body. In terms of biological role, assembles around the rod to form the L-ring and probably protects the motor/basal body from shearing forces during rotation. This is Flagellar L-ring protein from Herminiimonas arsenicoxydans.